The primary structure comprises 215 residues: MHFNELRISQDNRFLIIDVSVDNQDYFEDVLLDSIVIDTQDTFVMNGPSDNPLYIYNVEDAYDLTYSLPEQCNCNPVRVEEDESYCFTYGTQQMKNVRLELNIQDLKVSPCSTMFFVYVKSKGTPSTDTPCGFDKDQILGTVINLQPIYKQTLKYLKEVECDCNIPKGFIDMILKLKAIELCVRTGNYPQAIKYWNKFFIKNNCKSPTSNCGCYG.

In terms of assembly, heterotrimer with THB. The heterotrimers further assemble as 12 docking hubs that anchor the trimeric tail fibers.

It localises to the virion. Functionally, forms the tail hub together with tail hub protein B (THB). This Bacteroides phage crAss001 (Bacteroides phage PhiCrAss001) protein is Tail hub protein A.